We begin with the raw amino-acid sequence, 583 residues long: 2-succinyl-5-enolpyruvyl-6-hydroxy-3-cyclohexene-1-carboxylate synthase (583 aa).

It belongs to the TPP enzyme family. MenD subfamily. As to quaternary structure, homodimer. Requires Mg(2+) as cofactor. Mn(2+) serves as cofactor. The cofactor is thiamine diphosphate.

It catalyses the reaction isochorismate + 2-oxoglutarate + H(+) = 5-enolpyruvoyl-6-hydroxy-2-succinyl-cyclohex-3-ene-1-carboxylate + CO2. Its pathway is quinol/quinone metabolism; 1,4-dihydroxy-2-naphthoate biosynthesis; 1,4-dihydroxy-2-naphthoate from chorismate: step 2/7. It functions in the pathway quinol/quinone metabolism; menaquinone biosynthesis. In terms of biological role, catalyzes the thiamine diphosphate-dependent decarboxylation of 2-oxoglutarate and the subsequent addition of the resulting succinic semialdehyde-thiamine pyrophosphate anion to isochorismate to yield 2-succinyl-5-enolpyruvyl-6-hydroxy-3-cyclohexene-1-carboxylate (SEPHCHC). The chain is 2-succinyl-5-enolpyruvyl-6-hydroxy-3-cyclohexene-1-carboxylate synthase from Chlorobium phaeovibrioides (strain DSM 265 / 1930) (Prosthecochloris vibrioformis (strain DSM 265)).